The following is a 461-amino-acid chain: MLKIFNTLTRQKEEFKPIHAGEVGMYVCGITVYDLCHIGHGRTFVAFDVVARYLRFLGYKLKYVRNITDIDDKIIKRANENGESFVALVDRMIAEMHKDFDALNILRPDMEPRATHHIAEIIELTEQLIAKGHAYVADNGDVMFDVPTDPTYGVLSRQDLDQLQAGARVDVVDDKRNPMDFVLWKMSKEGEPSWPSPWGAGRPGWHIECSAMNCKQLGNHFDIHGGGSDLMFPHHENEIAQSTCAHDGQYVNYWMHSGMVMVDREKMSKSLGNFFTVRDVLKYYDAETVRYFLMSGHYRSQLNYSEENLKQARAALERLYTALRGTDKTVAPAGGEAFEARFIEAMDDDFNTPEAYSVLFDMAREVNRLKAEDMVAANAMASHLRKLSAVLGLLEQEPEAFLQSGAQADDSEVAEIEALIQQRLDARKAKDWAAADAARDRLNEMGIVLEDGPQGTTWRRK.

Cys28 serves as a coordination point for Zn(2+). The short motif at 30–40 is the 'HIGH' region element; it reads ITVYDLCHIGH. The Zn(2+) site is built by Cys209, His234, and Glu238. Positions 266 to 270 match the 'KMSKS' region motif; sequence KMSKS. Position 269 (Lys269) interacts with ATP.

The protein belongs to the class-I aminoacyl-tRNA synthetase family. Monomer. The cofactor is Zn(2+).

The protein resides in the cytoplasm. It catalyses the reaction tRNA(Cys) + L-cysteine + ATP = L-cysteinyl-tRNA(Cys) + AMP + diphosphate. This Escherichia fergusonii (strain ATCC 35469 / DSM 13698 / CCUG 18766 / IAM 14443 / JCM 21226 / LMG 7866 / NBRC 102419 / NCTC 12128 / CDC 0568-73) protein is Cysteine--tRNA ligase.